The sequence spans 159 residues: Ribosomal RNA large subunit methyltransferase H (159 aa).

S-adenosyl-L-methionine is bound by residues L76, G108, and 127–132 (FGLLTF).

This sequence belongs to the RNA methyltransferase RlmH family. As to quaternary structure, homodimer.

Its subcellular location is the cytoplasm. The catalysed reaction is pseudouridine(1915) in 23S rRNA + S-adenosyl-L-methionine = N(3)-methylpseudouridine(1915) in 23S rRNA + S-adenosyl-L-homocysteine + H(+). In terms of biological role, specifically methylates the pseudouridine at position 1915 (m3Psi1915) in 23S rRNA. The protein is Ribosomal RNA large subunit methyltransferase H of Streptococcus thermophilus (strain ATCC BAA-491 / LMD-9).